Here is a 206-residue protein sequence, read N- to C-terminus: Transmembrane emp24 domain-containing protein bai (206 aa).

The N-terminal stretch at 1–20 (MLKVLYVIFTIFGYIWPIYS) is a signal peptide. Residues 21–172 (VMFHLTPNTQ…RDTNEKTNSR (152 aa)) lie on the Lumenal side of the membrane. The 111-residue stretch at 30 to 140 (QKCLKEDIQA…LKPLEVDLKR (111 aa)) folds into the GOLD domain. A helical transmembrane segment spans residues 173 to 193 (VLFFSIFSMCCLLGLATWQVL). The Cytoplasmic portion of the chain corresponds to 194–206 (YLRRYFKAKKLIE).

It belongs to the EMP24/GP25L family.

It localises to the membrane. Eca and bai are essential, though not redundant, for dorsoventral patterning of the embryo. Specifically required during early embryogenesis for the activity of maternal tkv, while the zygotic tkv is not affected. The protein is Transmembrane emp24 domain-containing protein bai of Drosophila virilis (Fruit fly).